A 214-amino-acid polypeptide reads, in one-letter code: Thymidylate kinase (214 aa).

11–18 (GPEGAGKT) contacts ATP.

Belongs to the thymidylate kinase family.

It catalyses the reaction dTMP + ATP = dTDP + ADP. Functionally, phosphorylation of dTMP to form dTDP in both de novo and salvage pathways of dTTP synthesis. This chain is Thymidylate kinase, found in Leuconostoc citreum (strain KM20).